The chain runs to 74 residues: Tetrahydromethanopterin S-methyltransferase subunit G (74 aa).

Residues Val47–Leu67 form a helical membrane-spanning segment.

Belongs to the MtrG family. The complex is composed of 8 subunits; MtrA, MtrB, MtrC, MtrD, MtrE, MtrF, MtrG and MtrH.

The protein localises to the cell membrane. The enzyme catalyses 5-methyl-5,6,7,8-tetrahydromethanopterin + coenzyme M + 2 Na(+)(in) = 5,6,7,8-tetrahydromethanopterin + methyl-coenzyme M + 2 Na(+)(out). Its pathway is one-carbon metabolism; methanogenesis from CO(2); methyl-coenzyme M from 5,10-methylene-5,6,7,8-tetrahydromethanopterin: step 2/2. Functionally, part of a complex that catalyzes the formation of methyl-coenzyme M and tetrahydromethanopterin from coenzyme M and methyl-tetrahydromethanopterin. This is an energy-conserving, sodium-ion translocating step. This is Tetrahydromethanopterin S-methyltransferase subunit G from Methanococcus maripaludis (strain DSM 14266 / JCM 13030 / NBRC 101832 / S2 / LL).